The sequence spans 221 residues: Lactate racemization regulatory protein (221 aa).

Residues 139 to 213 (NGKKGAICAF…NHKFIIQDVS (75 aa)) enclose the HTH crp-type domain. Positions 172-192 (NDDIAGFCGISSRSSVNRMLK) form a DNA-binding region, H-T-H motif.

Multimerizes on DNA. Multimerization is required for transcription activation.

With respect to regulation, L-lactate acts as a positive effector on the binding and multimerization of LarR on DNA, while D-lactate antagonizes the positive effect of L-lactate. Positive transcriptional regulator that is absolutely required for the expression of lactate racemase (Lar) activity. Controls Lar expression by sensing the L-/D-lactate ration. Binds to a 16-bp palindromic sequence (Lar box motif) that is present in the larR-larA intergenic region, allowing transcription of the larABCDE operon. The protein is Lactate racemization regulatory protein of Lactiplantibacillus plantarum (strain ATCC BAA-793 / NCIMB 8826 / WCFS1) (Lactobacillus plantarum).